The primary structure comprises 263 residues: Endonuclease 8 (263 aa).

Residue P2 is the Schiff-base intermediate with DNA of the active site. Catalysis depends on E3, which acts as the Proton donor. Catalysis depends on K53, which acts as the Proton donor; for beta-elimination activity. 3 residues coordinate DNA: Q70, R125, and N169. The FPG-type zinc-finger motif lies at 229–263 (KVFHREGKACERCGGVIERSTLSSRPFYGCPVCQK). The Proton donor; for delta-elimination activity role is filled by R253.

Belongs to the FPG family. Requires Zn(2+) as cofactor.

It carries out the reaction 2'-deoxyribonucleotide-(2'-deoxyribose 5'-phosphate)-2'-deoxyribonucleotide-DNA = a 3'-end 2'-deoxyribonucleotide-(2,3-dehydro-2,3-deoxyribose 5'-phosphate)-DNA + a 5'-end 5'-phospho-2'-deoxyribonucleoside-DNA + H(+). Functionally, involved in base excision repair of DNA damaged by oxidation or by mutagenic agents. Acts as a DNA glycosylase that recognizes and removes damaged bases. Has a preference for oxidized pyrimidines, such as thymine glycol, 5,6-dihydrouracil and 5,6-dihydrothymine. Has AP (apurinic/apyrimidinic) lyase activity and introduces nicks in the DNA strand. Cleaves the DNA backbone by beta-delta elimination to generate a single-strand break at the site of the removed base with both 3'- and 5'-phosphates. This chain is Endonuclease 8, found in Enterobacter sp. (strain 638).